We begin with the raw amino-acid sequence, 425 residues long: E3 ubiquitin-protein ligase GW2 (425 aa).

The segment at 62–105 (CPICFLYYPSLNRSKCCSKGICTECFLQMKPTHTAQPTQCPFCK) adopts an RING-type; degenerate zinc-finger fold.

In terms of tissue distribution, expressed in roots, shoots, leaves, inflorescence meristems, stamens, pistils, spikelet hulls and endosperms 4 days after fertilization.

The protein resides in the cytoplasm. The enzyme catalyses S-ubiquitinyl-[E2 ubiquitin-conjugating enzyme]-L-cysteine + [acceptor protein]-L-lysine = [E2 ubiquitin-conjugating enzyme]-L-cysteine + N(6)-ubiquitinyl-[acceptor protein]-L-lysine.. It participates in protein modification; protein ubiquitination. Its function is as follows. E3 ubiquitin-protein ligase involved in the regulation of grain size. May limit grain width and weight by restricting cell proliferation of the spikelet hull. Possesses E3 ubiquitin-protein ligase activity in vitro. This is E3 ubiquitin-protein ligase GW2 from Oryza sativa subsp. indica (Rice).